Reading from the N-terminus, the 187-residue chain is Elongation factor P 2 (187 aa).

It belongs to the elongation factor P family.

Its subcellular location is the cytoplasm. It participates in protein biosynthesis; polypeptide chain elongation. In terms of biological role, involved in peptide bond synthesis. Stimulates efficient translation and peptide-bond synthesis on native or reconstituted 70S ribosomes in vitro. Probably functions indirectly by altering the affinity of the ribosome for aminoacyl-tRNA, thus increasing their reactivity as acceptors for peptidyl transferase. The polypeptide is Elongation factor P 2 (Geobacter sulfurreducens (strain ATCC 51573 / DSM 12127 / PCA)).